The following is a 305-amino-acid chain: Putative cuticle collagen 90 (305 aa).

Disordered regions lie at residues 95–117 (AGPP…GDLG) and 146–305 (PPGQ…AKRH). Triple-helical region stretches follow at residues 96-125 (GPPG…SGIS), 142-204 (GPAG…PGTA), 208-252 (GAVG…NGRD), and 256-270 (GQPG…VGKD). The segment covering 150-162 (QGPVGPQGFPGVV) has biased composition (low complexity). Over residues 278–288 (ARRDSKTESVH) the composition is skewed to basic and acidic residues.

It belongs to the cuticular collagen family. Collagen polypeptide chains are complexed within the cuticle by disulfide bonds and other types of covalent cross-links.

In terms of biological role, nematode cuticles are composed largely of collagen-like proteins. The cuticle functions both as an exoskeleton and as a barrier to protect the worm from its environment. This is Putative cuticle collagen 90 (col-90) from Caenorhabditis elegans.